A 151-amino-acid chain; its full sequence is Cytochrome c-type biogenesis protein CcmE 2 (151 aa).

At 1–8 the chain is on the cytoplasmic side; sequence MNPLRKKR. Residues 9–29 form a helical; Signal-anchor for type II membrane protein membrane-spanning segment; the sequence is LVIILAILVGVGAAVGLALSA. Residues 30 to 151 are Periplasmic-facing; sequence LQQNINLFYT…QSAPAPGKEG (122 aa). 2 residues coordinate heme: His-124 and Tyr-128.

The protein belongs to the CcmE/CycJ family.

It is found in the cell inner membrane. In terms of biological role, heme chaperone required for the biogenesis of c-type cytochromes. Transiently binds heme delivered by CcmC and transfers the heme to apo-cytochromes in a process facilitated by CcmF and CcmH. This Pseudomonas fluorescens (strain Pf0-1) protein is Cytochrome c-type biogenesis protein CcmE 2.